The chain runs to 213 residues: Small ribosomal subunit protein uS4 (213 aa).

Residues 16–53 form a disordered region; sequence GTDLGLKSGVKPYDVKTKKSARPPGQHGVSRNKSSEYS. A compositionally biased stretch (polar residues) spans 44 to 53; the sequence is VSRNKSSEYS. The region spanning 97-163 is the S4 RNA-binding domain; it reads SRLDNVVYRM…EKSREQLRIK (67 aa).

This sequence belongs to the universal ribosomal protein uS4 family. As to quaternary structure, part of the 30S ribosomal subunit. Contacts protein S5. The interaction surface between S4 and S5 is involved in control of translational fidelity.

In terms of biological role, one of the primary rRNA binding proteins, it binds directly to 16S rRNA where it nucleates assembly of the body of the 30S subunit. Functionally, with S5 and S12 plays an important role in translational accuracy. In Psychrobacter cryohalolentis (strain ATCC BAA-1226 / DSM 17306 / VKM B-2378 / K5), this protein is Small ribosomal subunit protein uS4.